The sequence spans 241 residues: Glutathione S-transferase omega-1 (241 aa).

An N-acetylserine modification is found at S2. Residues 22-101 enclose the GST N-terminal domain; it reads GQIRVYSMRF…YLDEAYPEKK (80 aa). C32 (nucleophile) is an active-site residue. The residue at position 57 (K57) is an N6-acetyllysine. Residues K59, V72, and 85 to 86 each bind glutathione; that span reads ES. Residues 106 to 228 form the GST C-terminal domain; it reads DPYEKACQKM…AKTYRDYLSL (123 aa). S129 is modified (phosphoserine). N6-acetyllysine is present on residues K143, K148, and K152.

Belongs to the GST superfamily. Omega family. As to quaternary structure, homodimer.

The protein localises to the cytoplasm. It localises to the cytosol. The catalysed reaction is RX + glutathione = an S-substituted glutathione + a halide anion + H(+). The enzyme catalyses L-dehydroascorbate + 2 glutathione = glutathione disulfide + L-ascorbate. It catalyses the reaction methylarsonate + 2 glutathione + H(+) = methylarsonous acid + glutathione disulfide + H2O. Exhibits glutathione-dependent thiol transferase and dehydroascorbate reductase activities. Has S-(phenacyl)glutathione reductase activity. Also has glutathione S-transferase activity. Participates in the biotransformation of inorganic arsenic and reduces monomethylarsonic acid (MMA) and dimethylarsonic acid. The sequence is that of Glutathione S-transferase omega-1 (Gsto1) from Rattus norvegicus (Rat).